The chain runs to 493 residues: Glycerol kinase (493 aa).

Thr13 lines the ADP pocket. Positions 13, 14, and 15 each coordinate ATP. Residue Thr13 coordinates sn-glycerol 3-phosphate. Arg17 lines the ADP pocket. Sn-glycerol 3-phosphate contacts are provided by Arg83, Glu84, Tyr135, and Asp244. Glycerol-binding residues include Arg83, Glu84, Tyr135, Asp244, and Gln245. ADP contacts are provided by Thr266 and Gly309. Thr266, Gly309, Gln313, and Gly410 together coordinate ATP. Residues Gly410 and Asn414 each contribute to the ADP site.

It belongs to the FGGY kinase family.

The catalysed reaction is glycerol + ATP = sn-glycerol 3-phosphate + ADP + H(+). Its pathway is polyol metabolism; glycerol degradation via glycerol kinase pathway; sn-glycerol 3-phosphate from glycerol: step 1/1. Its activity is regulated as follows. Inhibited by fructose 1,6-bisphosphate (FBP). Key enzyme in the regulation of glycerol uptake and metabolism. Catalyzes the phosphorylation of glycerol to yield sn-glycerol 3-phosphate. The polypeptide is Glycerol kinase (Shewanella piezotolerans (strain WP3 / JCM 13877)).